The primary structure comprises 102 residues: Large ribosomal subunit protein bL21 (102 aa).

The protein belongs to the bacterial ribosomal protein bL21 family. As to quaternary structure, part of the 50S ribosomal subunit. Contacts protein L20.

Its function is as follows. This protein binds to 23S rRNA in the presence of protein L20. The chain is Large ribosomal subunit protein bL21 from Lactiplantibacillus plantarum (strain ATCC BAA-793 / NCIMB 8826 / WCFS1) (Lactobacillus plantarum).